A 311-amino-acid polypeptide reads, in one-letter code: Cell division protein ZipA (311 aa).

Residues 1 to 5 (MQELR) are Periplasmic-facing. A helical transmembrane segment spans residues 6-26 (FVLIVVGALAIMALLFHGLWT). Residues 27 to 311 (SKKEGKAKFG…QIVEFKAANA (285 aa)) are Cytoplasmic-facing. Basic and acidic residues predominate over residues 32-54 (KAKFGDKPLSKLDLGESEPKESE). The interval 32-60 (KAKFGDKPLSKLDLGESEPKESEMYVAPE) is disordered.

It belongs to the ZipA family. In terms of assembly, interacts with FtsZ via their C-terminal domains.

It is found in the cell inner membrane. Functionally, essential cell division protein that stabilizes the FtsZ protofilaments by cross-linking them and that serves as a cytoplasmic membrane anchor for the Z ring. Also required for the recruitment to the septal ring of downstream cell division proteins. This Vibrio vulnificus (strain YJ016) protein is Cell division protein ZipA.